A 177-amino-acid chain; its full sequence is Large ribosomal subunit protein uL6 (177 aa).

Belongs to the universal ribosomal protein uL6 family. In terms of assembly, part of the 50S ribosomal subunit.

In terms of biological role, this protein binds to the 23S rRNA, and is important in its secondary structure. It is located near the subunit interface in the base of the L7/L12 stalk, and near the tRNA binding site of the peptidyltransferase center. In Herminiimonas arsenicoxydans, this protein is Large ribosomal subunit protein uL6.